Consider the following 305-residue polypeptide: MENNKCREDFRFTQEYEEDYPNTNERYYENYQVADRYYNYPNKYKEPKIKQCCCKKSMREALELLRYDALRPFVNFNQFAFISDFFIVGANLVGIDLSAPPKDNLSGLDGTFERFSACNCDLIDIAGRVSYPIPVPLTLEGLINTIGTIPGVAELIALIDAVIPPTIDLGAILDAILAAIIDFILAASTPLANVDLASLCNLKAVAFDITPADYEDFIASLGYYLDKKHYKECNCNCDCDDCCCNKGILDNLYMSNINNQVTVVAGSLVLTGVEVLGKKNDVIVLGNSNDSRIYFVCVDSIDYIA.

It localises to the spore coat. It is found in the spore. Its subcellular location is the perispore. Functionally, contributes to maintain proper thickness of the spore coat. May contribute to the formation of polar appendages. May play an important role in assembly of the outer layers of the spore coat. In Clostridioides difficile (strain 630) (Peptoclostridium difficile), this protein is Spore coat protein CotA.